The following is a 478-amino-acid chain: Aspartyl/glutamyl-tRNA(Asn/Gln) amidotransferase subunit B (478 aa).

It belongs to the GatB/GatE family. GatB subfamily. In terms of assembly, heterotrimer of A, B and C subunits.

It carries out the reaction L-glutamyl-tRNA(Gln) + L-glutamine + ATP + H2O = L-glutaminyl-tRNA(Gln) + L-glutamate + ADP + phosphate + H(+). The catalysed reaction is L-aspartyl-tRNA(Asn) + L-glutamine + ATP + H2O = L-asparaginyl-tRNA(Asn) + L-glutamate + ADP + phosphate + 2 H(+). Allows the formation of correctly charged Asn-tRNA(Asn) or Gln-tRNA(Gln) through the transamidation of misacylated Asp-tRNA(Asn) or Glu-tRNA(Gln) in organisms which lack either or both of asparaginyl-tRNA or glutaminyl-tRNA synthetases. The reaction takes place in the presence of glutamine and ATP through an activated phospho-Asp-tRNA(Asn) or phospho-Glu-tRNA(Gln). In Dichelobacter nodosus (strain VCS1703A), this protein is Aspartyl/glutamyl-tRNA(Asn/Gln) amidotransferase subunit B.